Reading from the N-terminus, the 350-residue chain is tRNA uridine(34) hydroxylase (350 aa).

One can recognise a Rhodanese domain in the interval 146-240 (DDPDAVFIDM…YARRAREQGL (95 aa)). C200 functions as the Cysteine persulfide intermediate in the catalytic mechanism. The span at 319–328 (RRRRAGRENG) shows a compositional bias: basic and acidic residues. Residues 319-350 (RRRRAGRENGNKIFNKSRGRLNSKLSIPDPAE) are disordered.

This sequence belongs to the TrhO family.

The catalysed reaction is uridine(34) in tRNA + AH2 + O2 = 5-hydroxyuridine(34) in tRNA + A + H2O. Catalyzes oxygen-dependent 5-hydroxyuridine (ho5U) modification at position 34 in tRNAs. This chain is tRNA uridine(34) hydroxylase, found in Salmonella heidelberg (strain SL476).